Reading from the N-terminus, the 225-residue chain is Dimerizing cyclase tstC (225 aa).

The first 19 residues, 1–19 (MRLSTLSSLLLGSSSIVFA), serve as a signal peptide directing secretion. N-linked (GlcNAc...) asparagine glycosylation is found at asparagine 146, asparagine 195, and asparagine 217.

This sequence belongs to the dimerizing cyclase tstC family.

It catalyses the reaction 2 [4-(deca-1,8-diyl)-2,5-dioxo-2,5-dihydro-3-furanyl]acetate + H(+) = 2-[(1R,8S,14R,15R)-11-hydroxy-14,15-bis[(6E)-oct-6-en-1-yl]-3,5,9-trioxo-4,10-dioxatetracyclo[9.4.0.0(2,6).0(8,12)]pentadeca-2(6),12-dien-8-yl]acetate + CO2. Its pathway is secondary metabolite biosynthesis. Functionally, dimerizing cyclase; part of the gene cluster that mediates the biosynthesis of the antihypercholesterolemic agents phomoidrides which are dimeric anhydrides. Within the pathway, tstC produces the bicyclo[4.3.1]deca-1,6-diene core of phomoidrides via the dimerization of the monomeric anhydrides leading to prephomoidride. The pathway begins with the highly reducing polyketide synthase tstA that catalyzes the formation of a C12-fatty acyl-ACP, starting from one acetate and 5 malonate units. The hydrolase tstM is involved in the release of the C12-fatty acyl chain from phiA. The alkylcitrate synthase (ACS) tstJ and the alkylcitrate dehydratase (ACDH) tstI then give rise to decarboxylated monomeric anhydrides by coupling the C12-fatty acyl chain with oxalacetic acid. The cyclase tstC is responsible for the dimerization of the monomeric anhydrides which leads to the production of prephomoidride that contains the characteristic bicyclo[4.3.1]deca-1,6-diene system of phomoidrides. Iterative oxidation catalyzed by the alpha-ketoglutarate-dependent dioxygenase tstK produced then phomoidride A. Finally, the methyltransferase tstE converts phomoidride A to phomoidride B via an acetalization reaction. The phosphatidylethanolamine-binding protein tstB and tstN are not essential for dimerization and their functions have still to be determined. The chain is Dimerizing cyclase tstC from Talaromyces stipitatus (strain ATCC 10500 / CBS 375.48 / QM 6759 / NRRL 1006) (Penicillium stipitatum).